A 335-amino-acid polypeptide reads, in one-letter code: ADP-L-glycero-D-manno-heptose-6-epimerase (335 aa).

Residues F11–I12, D32–D33, K39, E75–S79, and N92 contribute to the NADP(+) site. Y139 (proton acceptor) is an active-site residue. K143 is an NADP(+) binding site. A substrate-binding site is contributed by N172. Positions 173 and 181 each coordinate NADP(+). Catalysis depends on K181, which acts as the Proton acceptor. Residues R183, H190, F204–Y207, R217, and Y296 contribute to the substrate site.

It belongs to the NAD(P)-dependent epimerase/dehydratase family. HldD subfamily. As to quaternary structure, homopentamer. Requires NADP(+) as cofactor.

It carries out the reaction ADP-D-glycero-beta-D-manno-heptose = ADP-L-glycero-beta-D-manno-heptose. It participates in nucleotide-sugar biosynthesis; ADP-L-glycero-beta-D-manno-heptose biosynthesis; ADP-L-glycero-beta-D-manno-heptose from D-glycero-beta-D-manno-heptose 7-phosphate: step 4/4. Its function is as follows. Catalyzes the interconversion between ADP-D-glycero-beta-D-manno-heptose and ADP-L-glycero-beta-D-manno-heptose via an epimerization at carbon 6 of the heptose. The polypeptide is ADP-L-glycero-D-manno-heptose-6-epimerase (Polaromonas naphthalenivorans (strain CJ2)).